The following is a 391-amino-acid chain: 4-hydroxy-3-methylbut-2-en-1-yl diphosphate synthase (flavodoxin) (391 aa).

Residues Cys-282, Cys-285, Cys-317, and Glu-324 each coordinate [4Fe-4S] cluster.

Belongs to the IspG family. [4Fe-4S] cluster serves as cofactor.

The catalysed reaction is (2E)-4-hydroxy-3-methylbut-2-enyl diphosphate + oxidized [flavodoxin] + H2O + 2 H(+) = 2-C-methyl-D-erythritol 2,4-cyclic diphosphate + reduced [flavodoxin]. Its pathway is isoprenoid biosynthesis; isopentenyl diphosphate biosynthesis via DXP pathway; isopentenyl diphosphate from 1-deoxy-D-xylulose 5-phosphate: step 5/6. Converts 2C-methyl-D-erythritol 2,4-cyclodiphosphate (ME-2,4cPP) into 1-hydroxy-2-methyl-2-(E)-butenyl 4-diphosphate. This Acidothermus cellulolyticus (strain ATCC 43068 / DSM 8971 / 11B) protein is 4-hydroxy-3-methylbut-2-en-1-yl diphosphate synthase (flavodoxin).